The primary structure comprises 834 residues: Protein translocase subunit SecA (834 aa).

ATP-binding positions include Q85, 103-107 (GEGKT), and D491. The Zn(2+) site is built by C818, C820, C829, and C830.

It belongs to the SecA family. Monomer and homodimer. Part of the essential Sec protein translocation apparatus which comprises SecA, SecYEG and auxiliary proteins SecDF. Other proteins may also be involved. It depends on Zn(2+) as a cofactor.

The protein localises to the cell membrane. Its subcellular location is the cytoplasm. The enzyme catalyses ATP + H2O + cellular proteinSide 1 = ADP + phosphate + cellular proteinSide 2.. In terms of biological role, part of the Sec protein translocase complex. Interacts with the SecYEG preprotein conducting channel. Has a central role in coupling the hydrolysis of ATP to the transfer of proteins into and across the cell membrane, serving as an ATP-driven molecular motor driving the stepwise translocation of polypeptide chains across the membrane. The protein is Protein translocase subunit SecA of Clostridium kluyveri (strain ATCC 8527 / DSM 555 / NBRC 12016 / NCIMB 10680 / K1).